Here is a 195-residue protein sequence, read N- to C-terminus: ATP-dependent Clp protease proteolytic subunit (195 aa).

Catalysis depends on Ser101, which acts as the Nucleophile. His126 is a catalytic residue.

The protein belongs to the peptidase S14 family.

It is found in the plastid. It localises to the chloroplast stroma. The catalysed reaction is Hydrolysis of proteins to small peptides in the presence of ATP and magnesium. alpha-casein is the usual test substrate. In the absence of ATP, only oligopeptides shorter than five residues are hydrolyzed (such as succinyl-Leu-Tyr-|-NHMec, and Leu-Tyr-Leu-|-Tyr-Trp, in which cleavage of the -Tyr-|-Leu- and -Tyr-|-Trp bonds also occurs).. In terms of biological role, cleaves peptides in various proteins in a process that requires ATP hydrolysis. Has a chymotrypsin-like activity. Plays a major role in the degradation of misfolded proteins. The chain is ATP-dependent Clp protease proteolytic subunit from Bigelowiella natans (Pedinomonas minutissima).